The primary structure comprises 278 residues: Complement component 1 Q subcomponent-binding protein, mitochondrial (278 aa).

The N-terminal 70 residues, 1-70 (MFQLLRCVPR…PCACGCGCSG (70 aa)), are a transit peptide targeting the mitochondrion. The segment at 73-90 (TEGDKAFVDFLSDEIKEE) is C1q binding. Phosphoserine is present on Ser84. Lys88 and Lys91 each carry N6-acetyllysine. The segment at 136–164 (IPPAFGGEEEEPSQGQKAEEQEPELTSTP) is disordered. The segment at 166 to 209 (FVVEVTKDGSSKALVLDCHYPEDEIGQEDDQSDIFSIKEVSFQA) is interaction with MAVS. Tyr185 carries the phosphotyrosine modification. Ser197 and Ser201 each carry phosphoserine. At Thr210 the chain carries Phosphothreonine.

The protein belongs to the MAM33 family. Homotrimer; three monomers form a donut-shaped structure with an unusually asymmetric charge distribution on the surface. Interacts with CDK13, HRK, VTN, NFYB, ADRA1B, FOXC1, DDX21, DDX50, NCL, SRSF1 and SRSF9. Interacts with CD93; the association may represent a cell surface C1q receptor. Interacts with KRT1; the association represents a cell surface kininogen receptor. Interacts with CD209; the interaction is indicative for a C1q:C1QBP:CD209 signaling complex. Interacts with FBL and RRP1; the respective interactions with C1QBP are competitive. Probably associates with the mitoribosome. Interacts with MAVS; the interaction occurs upon viral transfection. Interacts with PPIF. Interacts with U2AF1L4. Interacts with PLEKHN1. Interacts with VGF-derived peptide TLQP-21. Interacts with MRE11 and RAD50; forming the MRC (MRE11-RAD50-C1QBP) complex that inhibits the activity of MRE11.

Its subcellular location is the mitochondrion matrix. The protein localises to the nucleus. It is found in the cell membrane. The protein resides in the secreted. It localises to the cytoplasm. Its subcellular location is the nucleolus. Multifunctional and multicompartmental protein involved in inflammation and infection processes, ribosome biogenesis, protein synthesis in mitochondria, regulation of apoptosis, transcriptional regulation and pre-mRNA splicing. At the cell surface is thought to act as an endothelial receptor for plasma proteins of the complement and kallikrein-kinin cascades. Putative receptor for C1q; specifically binds to the globular 'heads' of C1q thus inhibiting C1; may perform the receptor function through a complex with C1qR/CD93. In complex with cytokeratin-1/KRT1 is a high affinity receptor for kininogen-1/HMWK. Can also bind other plasma proteins, such as coagulation factor XII leading to its autoactivation. May function to bind initially fluid kininogen-1 to the cell membrane. The secreted form may enhance both extrinsic and intrinsic coagulation pathways. It is postulated that the cell surface form requires docking with transmembrane proteins for downstream signaling which might be specific for a cell-type or response. By acting as C1q receptor is involved in chemotaxis of immature dendritic cells and neutrophils and is proposed to signal through CD209/DC-SIGN on immature dendritic cells, through integrin alpha-4/beta-1 during trophoblast invasion of the decidua, and through integrin beta-1 during endothelial cell adhesion and spreading. Signaling involved in inhibition of innate immune response is implicating the PI3K-AKT/PKB pathway. Required for protein synthesis in mitochondria. In mitochondrial translation may be involved in formation of functional 55S mitoribosomes; the function seems to involve its RNA-binding activity. Acts as a RNA modification reader, which specifically recognizes and binds mitochondrial RNAs modified by C5-methylcytosine (m5C) in response to stress, and promotes recruitment of the mitochondrial degradosome complex, leading to their degradation. May be involved in the nucleolar ribosome maturation process; the function may involve the exchange of FBL for RRP1 in the association with pre-ribosome particles. Involved in regulation of RNA splicing by inhibiting the RNA-binding capacity of SRSF1 and its phosphorylation. Is required for the nuclear translocation of splicing factor U2AF1L4. Involved in regulation of CDKN2A- and HRK-mediated apoptosis. Stabilizes mitochondrial CDKN2A isoform smARF. May be involved in regulation of FOXC1 transcriptional activity and NFY/CCAAT-binding factor complex-mediated transcription. May play a role in antibacterial defense as it can bind to cell surface hyaluronan and inhibit Streptococcus pneumoniae hyaluronate lyase. May be involved in modulation of the immune response; ligation by HCV core protein is resulting in suppression of interleukin-12 production in monocyte-derived dendritic cells. Involved in regulation of antiviral response by inhibiting RIGI- and IFIH1-mediated signaling pathways probably involving its association with MAVS after viral infection. Acts as a regulator of DNA repair via homologous recombination by inhibiting the activity of MRE11: interacts with unphosphorylated MRE11 and RAD50 in absence of DNA damage, preventing formation and activity of the MRN complex. Following DNA damage, dissociates from phosphorylated MRE11, allowing formation of the MRN complex. The polypeptide is Complement component 1 Q subcomponent-binding protein, mitochondrial (C1QBP) (Bos taurus (Bovine)).